Here is an 84-residue protein sequence, read N- to C-terminus: Small ribosomal subunit protein uS17 (84 aa).

This sequence belongs to the universal ribosomal protein uS17 family. As to quaternary structure, part of the 30S ribosomal subunit.

One of the primary rRNA binding proteins, it binds specifically to the 5'-end of 16S ribosomal RNA. The polypeptide is Small ribosomal subunit protein uS17 (Clostridium botulinum (strain ATCC 19397 / Type A)).